Reading from the N-terminus, the 294-residue chain is Cytidine deaminase (294 aa).

2 CMP/dCMP-type deaminase domains span residues 48-168 and 186-294; these read DEDA…FGPK and LEGD…VLLG. A substrate-binding site is contributed by 89-91; sequence NME. His-102 is a binding site for Zn(2+). Catalysis depends on Glu-104, which acts as the Proton donor. 2 residues coordinate Zn(2+): Cys-129 and Cys-132.

Belongs to the cytidine and deoxycytidylate deaminase family. Homodimer. Requires Zn(2+) as cofactor.

It carries out the reaction cytidine + H2O + H(+) = uridine + NH4(+). The enzyme catalyses 2'-deoxycytidine + H2O + H(+) = 2'-deoxyuridine + NH4(+). This enzyme scavenges exogenous and endogenous cytidine and 2'-deoxycytidine for UMP synthesis. In Citrobacter koseri (strain ATCC BAA-895 / CDC 4225-83 / SGSC4696), this protein is Cytidine deaminase.